A 100-amino-acid polypeptide reads, in one-letter code: MSFSKREAGDVWSILFVTGIVTACLFAGVSVLMRMRFPDKSRPEWMLAGLIVLGVFAIWYSLVYVRGWEGAALGMLGFNVIFGAIAGYLIDKAIRRYRKR.

3 consecutive transmembrane segments (helical) span residues 11 to 33 (VWSILFVTGIVTACLFAGVSVLM), 45 to 64 (WMLAGLIVLGVFAIWYSLVY), and 68 to 90 (WEGAALGMLGFNVIFGAIAGYLI).

Its subcellular location is the cell membrane. This is an uncharacterized protein from Bacillus subtilis (strain 168).